The chain runs to 151 residues: Deoxyuridine 5'-triphosphate nucleotidohydrolase (151 aa).

Substrate-binding positions include 70 to 72, N83, 87 to 89, and K97; these read RSG and LID.

Belongs to the dUTPase family. Requires Mg(2+) as cofactor.

It carries out the reaction dUTP + H2O = dUMP + diphosphate + H(+). The protein operates within pyrimidine metabolism; dUMP biosynthesis; dUMP from dCTP (dUTP route): step 2/2. In terms of biological role, this enzyme is involved in nucleotide metabolism: it produces dUMP, the immediate precursor of thymidine nucleotides and it decreases the intracellular concentration of dUTP so that uracil cannot be incorporated into DNA. The polypeptide is Deoxyuridine 5'-triphosphate nucleotidohydrolase (Idiomarina loihiensis (strain ATCC BAA-735 / DSM 15497 / L2-TR)).